The following is a 378-amino-acid chain: MNIWLSMLTTTGLGAIIGGFTNHLAIKMLFRPHRPIYIGKFQVPFTPGLIPKRRDELAVQLGKMVVEHLLTPEGIGKKLTNEEFQKGLIHWAQVEVDKVITNEQSLRHMLEKWDVAHVEKEATEKIEQVITEKIQSFLEEYYTYTWEQALPHSVHEKIENAIPNVSAFILKRAIHFFESEEGKSRLSKMIDDFFASRGTLLNLVGMFLGNVSVVDRVQPEVIKFLGQDGTKQLLTEVLQKEWEKLKGRDVKEVETFVEKEMIVSSILSAVKVEETVSKFLNQSVQQVCEPVRETIMEKVVPSAVTKGLKWGAENVASILNNLHLAEIVQQEVSTFSTERLEDLVLSITKNELKMITYLGALLGGMIGIVQGLLLLFLK.

The next 2 membrane-spanning stretches (helical) occupy residues 1-21 (MNIWLSMLTTTGLGAIIGGFT) and 357-377 (YLGALLGGMIGIVQGLLLLFL).

This sequence belongs to the UPF0754 family.

It is found in the cell membrane. This is UPF0754 membrane protein BCQ_0944 from Bacillus cereus (strain Q1).